The chain runs to 304 residues: 6-dehydroglucose reductase (304 aa).

3 residues coordinate NADP(+): tryptophan 28, arginine 29, and aspartate 56. The Proton donor role is filled by tyrosine 61. Residues tyrosine 61, histidine 133, and arginine 134 each contribute to the D-glucose site. Residues serine 163, asparagine 164, glutamine 185, serine 215, leucine 217, glycine 219, glycine 268, serine 269, glutamine 270, and arginine 274 each contribute to the NADP(+) site.

Belongs to the aldo/keto reductase family.

The catalysed reaction is D-glucose + NADP(+) = 6-dehydro-D-glucose + NADPH + H(+). Part of the alkanesulfonate monooxygenase (sulfo-ASMO) pathway, a D-sulfoquinovose degradation pathway that enables the complete utilization of all carbons within sulfoquinovose (SQ) with concomitant production of inorganic sulfite. Catalyzes the NADP-dependent reduction of 6-dehydro-D-glucose to D-glucose. Can also catalyze the reversible reaction, the formation of 6-dehydro-D-glucose from D-glucose in the presence of NADP(+). The sequence is that of 6-dehydroglucose reductase from Novosphingobium aromaticivorans (strain ATCC 700278 / DSM 12444 / CCUG 56034 / CIP 105152 / NBRC 16084 / F199).